The primary structure comprises 191 residues: Protein Ves (191 aa).

The protein belongs to the Ves family.

The chain is Protein Ves from Escherichia coli (strain ATCC 8739 / DSM 1576 / NBRC 3972 / NCIMB 8545 / WDCM 00012 / Crooks).